Here is a 160-residue protein sequence, read N- to C-terminus: Large ribosomal subunit protein eL21 (160 aa).

2 stretches are compositionally biased toward basic and acidic residues: residues 112–123 (NDQKKKEAKEKG) and 136–145 (REAHFVRTNG). Positions 112–145 (NDQKKKEAKEKGTWVQLKRQPAPPREAHFVRTNG) are disordered.

It belongs to the eukaryotic ribosomal protein eL21 family. As to quaternary structure, component of the large ribosomal subunit.

The protein localises to the cytoplasm. Its subcellular location is the cytosol. It localises to the endoplasmic reticulum. Functionally, component of the large ribosomal subunit. The ribosome is a large ribonucleoprotein complex responsible for the synthesis of proteins in the cell. The protein is Large ribosomal subunit protein eL21 of Mus musculus (Mouse).